Consider the following 160-residue polypeptide: SsrA-binding protein (160 aa).

It belongs to the SmpB family.

The protein localises to the cytoplasm. Required for rescue of stalled ribosomes mediated by trans-translation. Binds to transfer-messenger RNA (tmRNA), required for stable association of tmRNA with ribosomes. tmRNA and SmpB together mimic tRNA shape, replacing the anticodon stem-loop with SmpB. tmRNA is encoded by the ssrA gene; the 2 termini fold to resemble tRNA(Ala) and it encodes a 'tag peptide', a short internal open reading frame. During trans-translation Ala-aminoacylated tmRNA acts like a tRNA, entering the A-site of stalled ribosomes, displacing the stalled mRNA. The ribosome then switches to translate the ORF on the tmRNA; the nascent peptide is terminated with the 'tag peptide' encoded by the tmRNA and targeted for degradation. The ribosome is freed to recommence translation, which seems to be the essential function of trans-translation. This chain is SsrA-binding protein, found in Dinoroseobacter shibae (strain DSM 16493 / NCIMB 14021 / DFL 12).